A 224-amino-acid chain; its full sequence is MATPTNKEHFSGGLAKVLAEKWQVDVMLKAKNSDEGSAISAHKLILASRSEVFKNMFELDEFKTSTKHVETITLSEMKHEELEAFVEFICSDGSMLSANVKQHARSLYLAADKYEILHLRDLCRTELISSLSLLNSLDLLVLAQIPFDKVLNDESFSYIKNNISTIASSDEFKLFVAGNPNLAVEIMKVSLITLTLRCSSCGSNHSLQGMYCCNCCRYGTLRLI.

Positions 24 to 98 (VDVMLKAKNS…ICSDGSMLSA (75 aa)) constitute a BTB domain.

In terms of assembly, interacts with CUL3A.

It participates in protein modification; protein ubiquitination. May act as a substrate-specific adapter of an E3 ubiquitin-protein ligase complex (CUL3-RBX1-BTB) which mediates the ubiquitination and subsequent proteasomal degradation of target proteins. The polypeptide is BTB/POZ domain-containing protein At5g48510 (Arabidopsis thaliana (Mouse-ear cress)).